Reading from the N-terminus, the 458-residue chain is Tyrosine phenol-lyase (458 aa).

Lys258 bears the N6-(pyridoxal phosphate)lysine mark.

Belongs to the beta-eliminating lyase family. As to quaternary structure, homotetramer. Requires pyridoxal 5'-phosphate as cofactor.

The catalysed reaction is L-tyrosine + H2O = phenol + pyruvate + NH4(+). This chain is Tyrosine phenol-lyase (tpl), found in Symbiobacterium thermophilum (strain DSM 24528 / JCM 14929 / IAM 14863 / T).